The chain runs to 392 residues: Neutrophil cytosol factor 1 (392 aa).

The 122-residue stretch at 4–125 folds into the PX domain; that stretch reads HFIRHIALLG…NFFKVRPDDL (122 aa). SH3 domains lie at 156–215 and 226–285; these read IILQ…PLDS and YAGE…KAGQ. The segment at 290 to 392 is disordered; sequence AKSQIKSRGA…STKRKLASAV (103 aa). Phosphoserine is present on residues serine 304 and serine 305. Residues 310 to 319 show a composition bias toward basic residues; that stretch reads HSIHQRSRKR. Phosphoserine is present on residues serine 321, serine 329, and serine 348. Residues 376 to 385 are compositionally biased toward basic and acidic residues; it reads ILHRCSESTK.

Component of the phagocyte NADPH oxidase complex composed of an obligatory core heterodimer formed by the membrane proteins CYBA and CYBB and the cytosolic regulatory subunits NCF1/p47-phox, NCF2/p67-phox, NCF4/p40-phox and the small GTPase RAC1 or RAC2. Part of a cytosolic complex composed at least by NCF1, NCF2 and NCF4. Interacts (via C-terminus) with NCF2 (via the C-terminal SH3 domain). Interacts with NCF4. Interacts with CYBB. Interacts (via the second SH3 domain) with CYBA; interaction is phosphorylation-dependent. Interacts with NOXA1. Interacts with ADAM15. Interacts with TRAF4. Interacts with FASLG. Interacts with PARK7 (via C-terminus); the interaction is enhanced by LPS and modulates NCF1 phosphorylation and membrane translocation. In terms of processing, phosphorylated by PRKCD; phosphorylation induces activation of NCF1, leading to assembly and activation of the NADPH oxidase complex.

The protein localises to the cytoplasm. It is found in the cytosol. The protein resides in the membrane. Subunit of the phagocyte NADPH oxidase complex that mediates the transfer of electrons from cytosolic NADPH to O2 to produce the superoxide anion (O2(-)). In the activated complex, electrons are first transferred from NADPH to flavin adenine dinucleotide (FAD) and subsequently transferred via two heme molecules to molecular oxygen, producing superoxide through an outer-sphere reaction. Activation of the NADPH oxidase complex is initiated by the assembly of cytosolic subunits of the NADPH oxidase complex with the core NADPH oxidase complex to form a complex at the plasma membrane or phagosomal membrane. This activation process is initiated by phosphorylation dependent binding of the cytosolic NCF1/p47-phox subunit to the C-terminus of CYBA/p22-phox. The polypeptide is Neutrophil cytosol factor 1 (Bos taurus (Bovine)).